The following is a 605-amino-acid chain: Elongation factor 4 (605 aa).

The tr-type G domain maps to K11 to T193. Residues D23–T28 and N140–D143 each bind GTP.

It belongs to the TRAFAC class translation factor GTPase superfamily. Classic translation factor GTPase family. LepA subfamily.

It localises to the cell inner membrane. It catalyses the reaction GTP + H2O = GDP + phosphate + H(+). Functionally, required for accurate and efficient protein synthesis under certain stress conditions. May act as a fidelity factor of the translation reaction, by catalyzing a one-codon backward translocation of tRNAs on improperly translocated ribosomes. Back-translocation proceeds from a post-translocation (POST) complex to a pre-translocation (PRE) complex, thus giving elongation factor G a second chance to translocate the tRNAs correctly. Binds to ribosomes in a GTP-dependent manner. This chain is Elongation factor 4, found in Acinetobacter baumannii (strain SDF).